The following is a 942-amino-acid chain: DDB1- and CUL4-associated factor 5 (942 aa).

6 WD repeats span residues 51-91 (GHFG…HSRV), 99-139 (EHHS…LDVF), 140-180 (AHED…HGEP), 185-225 (NYPS…SSLL), 277-317 (FNSC…EAGG), and 331-370 (GHRSIVNQVRFNPHTYMICSSGVEKIIKIWSPYKQPGCTG). 2 disordered regions span residues 449–478 (GVSERSGYTDSESSASLPRSPPPTVDESAD) and 490–509 (TTNTVASTPPTPTCEDAASR). Positions 454–465 (SGYTDSESSASL) are enriched in polar residues. T500 bears the Phosphothreonine mark. Phosphoserine is present on residues S531, S533, S626, S628, S645, S648, and S651. Disordered regions lie at residues 544–655 (TDLF…DIES), 676–824 (NNKD…EERS), and 889–942 (ACET…KLKT). Residues 625–641 (LSSSPTSSPERSTSTLE) show a composition bias toward low complexity. Composition is skewed to basic and acidic residues over residues 690-701 (DEGRAGTSHKDN) and 728-738 (CSKDTFKEETP). A compositionally biased stretch (polar residues) spans 760–770 (GTSQDTGNSGS). Phosphoserine is present on S794. A compositionally biased stretch (polar residues) spans 801–815 (SGSTLNSGSGNCPRT).

In terms of assembly, interacts with DDB1, CUL4A or CUL4B. Interacts with L3MBTL3. Interacts with DNMT1. Interacts with E2F1. Interacts with SOX2. In terms of tissue distribution, ubiquitous.

The protein operates within protein modification; protein ubiquitination. In terms of biological role, is a substrate receptor for the CUL4-DDB1 E3 ubiquitin-protein ligase complex (CRL4). The complex CRL4-DCAF5 is involved in the ubiquitination of a set of methylated non-histone proteins, including SOX2, DNMT1 and E2F1. The polypeptide is DDB1- and CUL4-associated factor 5 (DCAF5) (Homo sapiens (Human)).